The sequence spans 98 residues: Large ribosomal subunit protein uL23 (98 aa).

Belongs to the universal ribosomal protein uL23 family. In terms of assembly, part of the 50S ribosomal subunit. Contacts protein L29, and trigger factor when it is bound to the ribosome.

Its function is as follows. One of the early assembly proteins it binds 23S rRNA. One of the proteins that surrounds the polypeptide exit tunnel on the outside of the ribosome. Forms the main docking site for trigger factor binding to the ribosome. This is Large ribosomal subunit protein uL23 from Ruegeria sp. (strain TM1040) (Silicibacter sp.).